Reading from the N-terminus, the 538-residue chain is Chaperonin GroEL (538 aa).

ATP contacts are provided by residues 29–32 (TLGP), 86–90 (DGTTT), glycine 413, 476–478 (NAA), and aspartate 492.

This sequence belongs to the chaperonin (HSP60) family. As to quaternary structure, forms a cylinder of 14 subunits composed of two heptameric rings stacked back-to-back. Interacts with the co-chaperonin GroES.

Its subcellular location is the cytoplasm. It carries out the reaction ATP + H2O + a folded polypeptide = ADP + phosphate + an unfolded polypeptide.. Its function is as follows. Together with its co-chaperonin GroES, plays an essential role in assisting protein folding. The GroEL-GroES system forms a nano-cage that allows encapsulation of the non-native substrate proteins and provides a physical environment optimized to promote and accelerate protein folding. The polypeptide is Chaperonin GroEL (Bacillus sp. (strain PS3)).